Consider the following 376-residue polypeptide: Actin-related protein T1 (376 aa).

This sequence belongs to the actin family. As to expression, in skin, expressed in the basal, spinous and granular layers of the epidermis. Also expressed in hair follicles, sebaceaous glands, eccrine sweat glands and semen.

The protein resides in the cytoplasm. It is found in the cytoskeleton. Its subcellular location is the nucleus. The protein localises to the cytoplasmic vesicle. It localises to the secretory vesicle. The protein resides in the acrosome. Its function is as follows. Negatively regulates the Hedgehog (SHH) signaling. Binds to the promoter of the SHH signaling mediator, GLI1, and inhibits its expression. This is Actin-related protein T1 from Homo sapiens (Human).